The primary structure comprises 307 residues: Type 2A encapsulin shell protein (307 aa).

This sequence belongs to the encapsulin family. Family 2A subfamily. As to quaternary structure, homooligomeric. The encapsulin nanocompartment is formed by 60 subunits; monomers form pentamers which assemble to form shells. There are 12 charged pores where the pentamers meet as well as 3-fold axis channels and dimer channels.

Its subcellular location is the encapsulin nanocompartment. In terms of biological role, shell component of a type 2A encapsulin nanocompartment. Forms encapsulin nanocompartments about 24 nm in diameter from 60 monomers. Probably encapsulates at least cysteine desulfurase (CyD) and allows passage of cysteine into its interior, probably involved in sulfur metabolism. The protein is Type 2A encapsulin shell protein of Mycobacterium avium.